An 807-amino-acid polypeptide reads, in one-letter code: Glycerol-3-phosphate acyltransferase (807 aa).

An HXXXXD motif motif is present at residues 309 to 314; the sequence is CHRSHM.

Belongs to the GPAT/DAPAT family.

The protein resides in the cell inner membrane. The enzyme catalyses sn-glycerol 3-phosphate + an acyl-CoA = a 1-acyl-sn-glycero-3-phosphate + CoA. It functions in the pathway phospholipid metabolism; CDP-diacylglycerol biosynthesis; CDP-diacylglycerol from sn-glycerol 3-phosphate: step 1/3. The protein is Glycerol-3-phosphate acyltransferase of Aeromonas hydrophila subsp. hydrophila (strain ATCC 7966 / DSM 30187 / BCRC 13018 / CCUG 14551 / JCM 1027 / KCTC 2358 / NCIMB 9240 / NCTC 8049).